Consider the following 314-residue polypeptide: Mitochondrial RNA-splicing protein MRS3 (314 aa).

3 Solcar repeats span residues 31 to 118 (APLY…CKKN), 128 to 210 (HHPF…STKF), and 217 to 310 (YNPL…AKHF). Helical transmembrane passes span 33–52 (LYHQLIAGAFAGIMEHSVMF), 93–112 (GVQSVILGAGPAHAVYFGTY), 130–149 (PFKTAISGACATTASDALMN), 185–204 (SYPTTLVMNIPFAAFNFVIY), 219–238 (PLIHCLCGSISGSTCAAITT), and 285–298 (GWKPRIVANMPATA).

Belongs to the mitochondrial carrier (TC 2.A.29) family.

The protein localises to the mitochondrion inner membrane. Functionally, MRS3 suppresses a mitochondrial splice defect in the first intron of the COB gene. It may act as a carrier, exerting its suppressor activity via modulation of solute concentrations in the mitochondrion (possibly of cations). This chain is Mitochondrial RNA-splicing protein MRS3 (MRS3), found in Saccharomyces cerevisiae (strain ATCC 204508 / S288c) (Baker's yeast).